The primary structure comprises 565 residues: Ubiquitin carboxyl-terminal hydrolase 39 (565 aa).

Basic and acidic residues-rich tracts occupy residues 1–21 (MSGRSKRESRGSTRGKRESES) and 28–39 (VKRERDREREPE). Disordered stretches follow at residues 1–61 (MSGR…SARE) and 75–96 (EREVDEDSEPEREVRAKNGRVD). Ser-46 is subject to Phosphoserine. Lys-51 is covalently cross-linked (Glycyl lysine isopeptide (Lys-Gly) (interchain with G-Cter in SUMO2)). The residue at position 82 (Ser-82) is a Phosphoserine. Residues 85–96 (EREVRAKNGRVD) are compositionally biased toward basic and acidic residues. The UBP-type; degenerate zinc-finger motif lies at 103–200 (RHCPYLDTIN…YVLKPTFTKQ (98 aa)). Cys-136, Cys-139, His-155, and His-161 together coordinate Zn(2+). A USP domain is found at 225–555 (VGLNNIKAND…EAYIQIWKRR (331 aa)).

It belongs to the peptidase C19 family. The U4/U6-U5 tri-snRNP complex is a building block of the precatalytic spliceosome (spliceosome B complex). Component of the U4/U6-U5 tri-snRNP complex composed of the U4, U6 and U5 snRNAs and at least PRPF3, PRPF4, PRPF6, PRPF8, PRPF31, SNRNP200, TXNL4A, SNRNP40, SNRPB, SNRPD1, SNRPD2, SNRPD3, SNRPE, SNRPF, SNRPG, DDX23, CD2BP2, PPIH, SNU13, EFTUD2, SART1 and USP39, plus LSM2, LSM3, LSM4, LSM5, LSM6, LSM7 and LSM8.

Its subcellular location is the nucleus. The enzyme catalyses Thiol-dependent hydrolysis of ester, thioester, amide, peptide and isopeptide bonds formed by the C-terminal Gly of ubiquitin (a 76-residue protein attached to proteins as an intracellular targeting signal).. Functionally, deubiquitinating enzyme that plays a role in many cellular processes including cellular antiviral response, epithelial morphogenesis, DNA repair or B-cell development. Plays a role in pre-mRNA splicing as a component of the U4/U6-U5 tri-snRNP, one of the building blocks of the precatalytic spliceosome. Specifically regulates immunoglobulin gene rearrangement in a spliceosome-dependent manner, which involves modulating chromatin interactions at the Igh locus and therefore plays an essential role in B-cell development. Regulates AURKB mRNA levels, and thereby plays a role in cytokinesis and in the spindle checkpoint. Regulates apoptosis and G2/M cell cycle checkpoint in response to DNA damage by deubiquitinating and stabilizing CHK2. Also plays an important role in DNA repair by controlling the recruitment of XRCC4/LIG4 to DNA double-strand breaks for non-homologous end-joining repair. Participates in antiviral activity by affecting the type I IFN signaling by stabilizing STAT1 and decreasing its 'Lys-6'-linked ubiquitination. Contributes to non-canonical Wnt signaling during epidermal differentiation. Acts as a negative regulator NF-kappa-B activation through deubiquitination of 'Lys-48'-linked ubiquitination of NFKBIA. This Pongo abelii (Sumatran orangutan) protein is Ubiquitin carboxyl-terminal hydrolase 39 (USP39).